The primary structure comprises 489 residues: Cytochrome P450 monooxygenase tazI (489 aa).

C433 serves as a coordination point for heme.

It belongs to the cytochrome P450 family. It depends on heme as a cofactor.

The protein operates within secondary metabolite biosynthesis. Its function is as follows. Cytochrome P450 monooxygenase; part of the gene cluster that mediates the biosynthesis of azaterrilone A and other azaphilones, a class of fungal metabolites characterized by a highly oxygenated pyrano-quinone bicyclic core and exhibiting a broad range of bioactivities. The first step of the pathway begins with the non-reducing polyketide synthase tazA that assembles one acetyl-CoA starter unit, five malonyl-CoA units, and catalyzes a series of Claisen condensations, methylation, PT-mediated cyclization, and finally releases the first hexaketide precursor through the R-domain. The tazA product then undergoes reduction on its terminal ketone and the following pyran-ring formation by yet undetermined enzyme(s). Dehydration and enoyl reduction, possibly involving the trans-enoyl reductase tazE leads to the next intermediate. TazD is predicted as an acetyltransferase and might catalyze the acetylation steps leading to the synthesis of azaterrilone A. Azaterrilone A is not the final product of the taz pathway and both the highly reducing polyketide synthase tazB and the dual enzyme tazHJ catalyze late steps of the pathway, leading to the production of the 2 final stereoisomers that contain additional polyketide modification whose structures have still to be determined. The polypeptide is Cytochrome P450 monooxygenase tazI (Aspergillus terreus (strain NIH 2624 / FGSC A1156)).